The primary structure comprises 717 residues: Polyribonucleotide nucleotidyltransferase (717 aa).

2 residues coordinate Mg(2+): aspartate 486 and aspartate 492. The KH domain occupies 553–612 (PKIIQLQIDIDKISLVIGSTGKTVKAITDEFEVRVQIEQDGRITLFGTDSLKMQKAKARI). An S1 motif domain is found at 622–715 (GEIYEGVVKK…KFGKIELELV (94 aa)). The interval 650-683 (SNRPKSRDDRYGDMRHSRYGSGRHSRYGRDSRNT) is disordered. The segment covering 654–665 (KSRDDRYGDMRH) has biased composition (basic and acidic residues). The span at 666-675 (SRYGSGRHSR) shows a compositional bias: basic residues.

This sequence belongs to the polyribonucleotide nucleotidyltransferase family. Requires Mg(2+) as cofactor.

Its subcellular location is the cytoplasm. It catalyses the reaction RNA(n+1) + phosphate = RNA(n) + a ribonucleoside 5'-diphosphate. Functionally, involved in mRNA degradation. Catalyzes the phosphorolysis of single-stranded polyribonucleotides processively in the 3'- to 5'-direction. This is Polyribonucleotide nucleotidyltransferase from Borrelia turicatae (strain 91E135).